We begin with the raw amino-acid sequence, 489 residues long: Acetyl-coenzyme A carboxylase carboxyl transferase subunit beta, chloroplastic (489 aa).

Positions 222 to 489 constitute a CoA carboxyltransferase N-terminal domain; that stretch reads LWVQCENCYG…FFPLNSNSIK (268 aa). Positions 226, 229, 245, and 248 each coordinate Zn(2+). The segment at 226 to 248 adopts a C4-type zinc-finger fold; that stretch reads CENCYGLNYKKFFRSKMNICEQC.

It belongs to the AccD/PCCB family. As to quaternary structure, acetyl-CoA carboxylase is a heterohexamer composed of biotin carboxyl carrier protein, biotin carboxylase and 2 subunits each of ACCase subunit alpha and ACCase plastid-coded subunit beta (accD). Zn(2+) is required as a cofactor.

The protein resides in the plastid. The protein localises to the chloroplast stroma. It carries out the reaction N(6)-carboxybiotinyl-L-lysyl-[protein] + acetyl-CoA = N(6)-biotinyl-L-lysyl-[protein] + malonyl-CoA. It participates in lipid metabolism; malonyl-CoA biosynthesis; malonyl-CoA from acetyl-CoA: step 1/1. Functionally, component of the acetyl coenzyme A carboxylase (ACC) complex. Biotin carboxylase (BC) catalyzes the carboxylation of biotin on its carrier protein (BCCP) and then the CO(2) group is transferred by the transcarboxylase to acetyl-CoA to form malonyl-CoA. The polypeptide is Acetyl-coenzyme A carboxylase carboxyl transferase subunit beta, chloroplastic (Buxus microphylla (Littleleaf boxwood)).